A 159-amino-acid polypeptide reads, in one-letter code: UPF0201 protein MK0399 (159 aa).

This sequence belongs to the UPF0201 family.

The sequence is that of UPF0201 protein MK0399 from Methanopyrus kandleri (strain AV19 / DSM 6324 / JCM 9639 / NBRC 100938).